A 552-amino-acid polypeptide reads, in one-letter code: MKKIAGWFTLAVLFVLYYIVPLPGRLLWQPDETRYAEISREMLASGDWIVPHFLGLRYFEKPVAGYWVNNLGQWLFGDGNFAVRFGAVLATVLSALLVFWLARRLLSGPRPAVVAVLIYLTSFLVYGVGSYAVLDPIFTLWMTAAMCSFWLGEQASSARGKAGGYILLGLACGMGFMTKGFLALAIPVIAVLPWVIAQRRWKSLFCFGPLAVLSAILISLPWVLAIAQHEPDYWRYFFWVEHIQRFAEDNAQHKAPFWYYLPILLIGLLPWLGLLPGALREGWRGRVSQGGDFYLLGWAVMPFLLFSIAKGKLPTYILPCFAPLAILMAGYVQRLTGENGKALRINGLINLLVGLGGMAAILLVLAPWGITGHPLFGAHEIGKVILGTIAFGVWALFGALSLYHSRRYWRWSAACLLGVALLIGTALPQQVMESKQPQALIQAAMPQLQASRYILSDSVGVAAGLAWELKRSDIYMYDKTGELQYGLSYPDAAGHLVKAEQFPAWLAEHRKQGAISLVLLLPRDGQINPALPSADMTLRKGRFLLLQYQQQP.

The next 11 membrane-spanning stretches (helical) occupy residues Ile-4–Gly-24, Phe-81–Leu-101, Val-113–Val-133, Phe-176–Ile-196, Phe-207–Ala-227, Ala-255–Leu-275, Gln-289–Ala-309, Leu-313–Gln-333, Leu-351–Thr-371, Val-384–His-404, and Trp-411–Val-431.

Belongs to the glycosyltransferase 83 family.

It is found in the cell inner membrane. It carries out the reaction 4-amino-4-deoxy-alpha-L-arabinopyranosyl di-trans,octa-cis-undecaprenyl phosphate + lipid IVA = lipid IIA + di-trans,octa-cis-undecaprenyl phosphate.. The protein operates within lipopolysaccharide metabolism; 4-amino-4-deoxy-beta-L-arabinose-lipid A biosynthesis. Its function is as follows. Catalyzes the transfer of the L-Ara4N moiety of the glycolipid undecaprenyl phosphate-alpha-L-Ara4N to lipid A. The modified arabinose is attached to lipid A and is required for resistance to polymyxin and cationic antimicrobial peptides. This Edwardsiella ictaluri (strain 93-146) protein is Undecaprenyl phosphate-alpha-4-amino-4-deoxy-L-arabinose arabinosyl transferase.